Here is a 608-residue protein sequence, read N- to C-terminus: Albumin 2 (608 aa).

The N-terminal stretch at Met-1–Ser-14 is a signal peptide. Residues Val-15–Arg-18 constitute a propeptide that is removed on maturation. 3 Albumin domains span residues Ser-19–His-205, Ala-206–Asp-398, and Lys-402–Ser-600. Intrachain disulfides connect Cys-26–Cys-72, Cys-71–Cys-80, Cys-93–Cys-108, Cys-107–Cys-118, Cys-142–Cys-187, Cys-186–Cys-195, Cys-218–Cys-264, Cys-263–Cys-271, Cys-283–Cys-299, Cys-298–Cys-309, Cys-336–Cys-381, Cys-380–Cys-389, Cys-414–Cys-460, Cys-459–Cys-471, Cys-484–Cys-500, Cys-499–Cys-510, Cys-537–Cys-582, and Cys-581–Cys-590. Asn-501 is a glycosylation site (N-linked (GlcNAc...) asparagine).

Belongs to the ALB/AFP/VDB family. Plasma.

The protein localises to the secreted. In terms of biological role, binds water, Ca(2+), Na(+), K(+), fatty acids, hormones, bilirubin and drugs. Its main function is the regulation of the colloidal osmotic pressure of blood. This is Albumin 2 (alb2) from Salmo salar (Atlantic salmon).